The chain runs to 159 residues: Small ribosomal subunit protein uS17 (159 aa).

Belongs to the universal ribosomal protein uS17 family.

This is Small ribosomal subunit protein uS17 (RPS11) from Euphorbia esula (Leafy spurge).